Consider the following 458-residue polypeptide: tRNA modification GTPase MnmE (458 aa).

(6S)-5-formyl-5,6,7,8-tetrahydrofolate contacts are provided by arginine 26, glutamate 88, and arginine 127. A TrmE-type G domain is found at 224–378 (GLSTAIIGRP…IEDRINQLFF (155 aa)). Asparagine 234 serves as a coordination point for K(+). GTP-binding positions include 234-239 (NVGKSS), 253-259 (TDIAGTT), and 278-281 (DTAG). Serine 238 is a Mg(2+) binding site. Residues threonine 253, isoleucine 255, and threonine 258 each coordinate K(+). Threonine 259 is a binding site for Mg(2+). Lysine 458 is a binding site for (6S)-5-formyl-5,6,7,8-tetrahydrofolate.

The protein belongs to the TRAFAC class TrmE-Era-EngA-EngB-Septin-like GTPase superfamily. TrmE GTPase family. In terms of assembly, homodimer. Heterotetramer of two MnmE and two MnmG subunits. It depends on K(+) as a cofactor.

It is found in the cytoplasm. In terms of biological role, exhibits a very high intrinsic GTPase hydrolysis rate. Involved in the addition of a carboxymethylaminomethyl (cmnm) group at the wobble position (U34) of certain tRNAs, forming tRNA-cmnm(5)s(2)U34. In Streptococcus pyogenes serotype M1, this protein is tRNA modification GTPase MnmE.